A 413-amino-acid chain; its full sequence is Arginine biosynthesis bifunctional protein ArgJ (413 aa).

Substrate is bound by residues Thr-158, Lys-184, Thr-195, Glu-285, Asn-408, and Ser-413. Thr-195 acts as the Nucleophile in catalysis.

Belongs to the ArgJ family. In terms of assembly, heterotetramer of two alpha and two beta chains.

It localises to the cytoplasm. The catalysed reaction is N(2)-acetyl-L-ornithine + L-glutamate = N-acetyl-L-glutamate + L-ornithine. It catalyses the reaction L-glutamate + acetyl-CoA = N-acetyl-L-glutamate + CoA + H(+). It participates in amino-acid biosynthesis; L-arginine biosynthesis; L-ornithine and N-acetyl-L-glutamate from L-glutamate and N(2)-acetyl-L-ornithine (cyclic): step 1/1. It functions in the pathway amino-acid biosynthesis; L-arginine biosynthesis; N(2)-acetyl-L-ornithine from L-glutamate: step 1/4. Functionally, catalyzes two activities which are involved in the cyclic version of arginine biosynthesis: the synthesis of N-acetylglutamate from glutamate and acetyl-CoA as the acetyl donor, and of ornithine by transacetylation between N(2)-acetylornithine and glutamate. This Agrobacterium fabrum (strain C58 / ATCC 33970) (Agrobacterium tumefaciens (strain C58)) protein is Arginine biosynthesis bifunctional protein ArgJ.